A 1081-amino-acid polypeptide reads, in one-letter code: Probable sucrose-phosphate synthase 2 (1081 aa).

Disordered regions lie at residues 116–152, 239–267, and 760–780; these read EQGRKDVTEDMSEDLSEGEKGDVMGETPVALDSPRGN, EPTEMLSSSSTTAGEAHEPEEEEEEEDLG, and IKRQDSGPAQREAEGKAGDVP. Residues 256–267 show a composition bias toward acidic residues; sequence EPEEEEEEEDLG.

It belongs to the glycosyltransferase 1 family. Homodimer or homotetramer.

The enzyme catalyses beta-D-fructose 6-phosphate + UDP-alpha-D-glucose = sucrose 6(F)-phosphate + UDP + H(+). Its pathway is glycan biosynthesis; sucrose biosynthesis; sucrose from D-fructose 6-phosphate and UDP-alpha-D-glucose: step 1/2. Activity is regulated by phosphorylation and moderated by concentration of metabolites and light. In terms of biological role, plays a role in photosynthetic sucrose synthesis by catalyzing the rate-limiting step of sucrose biosynthesis from UDP-glucose and fructose- 6-phosphate. Involved in the regulation of carbon partitioning in the leaves of plants. May regulate the synthesis of sucrose and therefore play a major role as a limiting factor in the export of photoassimilates out of the leaf. Plays a role for sucrose availability that is essential for plant growth and fiber elongation. This chain is Probable sucrose-phosphate synthase 2 (SPS2), found in Craterostigma plantagineum (Blue gem).